Here is a 177-residue protein sequence, read N- to C-terminus: Peptidyl-prolyl cis-trans isomerase H (177 aa).

Position 2 is an N-acetylalanine (A2). Residues 14–176 enclose the PPIase cyclophilin-type domain; it reads FFDVSIGGQE…LPVVISQCGE (163 aa).

The protein belongs to the cyclophilin-type PPIase family. PPIase H subfamily. As to quaternary structure, interacts directly with PRPF4. Part of a heteromeric complex containing PPIH, PRPF3 and PRPF4 that is stable in the absence of RNA. Component of the U4/U6-U5 tri-snRNP complex composed of the U4, U6 and U5 snRNAs and at least PRPF3, PRPF4, PRPF6, PRPF8, PRPF31, SNRNP200, TXNL4A, SNRNP40, DDX23, CD2BP2, PPIH, SNU13, EFTUD2, SART1 and USP39. Heterodimer with PRPF18.

The protein resides in the nucleus speckle. It is found in the cytoplasm. It carries out the reaction [protein]-peptidylproline (omega=180) = [protein]-peptidylproline (omega=0). Its activity is regulated as follows. Inhibited by cyclosporin A. PPIase that catalyzes the cis-trans isomerization of proline imidic peptide bonds in oligopeptides and may therefore assist protein folding. Participates in pre-mRNA splicing. May play a role in the assembly of the U4/U5/U6 tri-snRNP complex, one of the building blocks of the spliceosome. May act as a chaperone. The sequence is that of Peptidyl-prolyl cis-trans isomerase H (PPIH) from Homo sapiens (Human).